Reading from the N-terminus, the 890-residue chain is Translation initiation factor IF-2 (890 aa).

The interval 45-304 (LIDHLNQKNS…LQQGFQKPAQ (260 aa)) is disordered. The segment covering 67–81 (STLNIPGTGGKSKSV) has biased composition (polar residues). A compositionally biased stretch (basic and acidic residues) spans 92-217 (VKRDPQEAER…RMAEENKWID (126 aa)). The span at 252–266 (GRGRNAKAARPKKGN) shows a compositional bias: basic residues. Basic and acidic residues predominate over residues 267-280 (KHAESKADREEARA). A tr-type G domain is found at 389-558 (PRAPVVTIMG…LLQAEVLELK (170 aa)). The interval 398–405 (GHVDHGKT) is G1. Residue 398-405 (GHVDHGKT) participates in GTP binding. The tract at residues 423 to 427 (GITQH) is G2. Positions 444–447 (DTPG) are G3. GTP contacts are provided by residues 444 to 448 (DTPGH) and 498 to 501 (NKID). The segment at 498–501 (NKID) is G4. A G5 region spans residues 534–536 (SAK). N6-acetyllysine is present on K808.

The protein belongs to the TRAFAC class translation factor GTPase superfamily. Classic translation factor GTPase family. IF-2 subfamily.

The protein resides in the cytoplasm. One of the essential components for the initiation of protein synthesis. Protects formylmethionyl-tRNA from spontaneous hydrolysis and promotes its binding to the 30S ribosomal subunits. Also involved in the hydrolysis of GTP during the formation of the 70S ribosomal complex. The sequence is that of Translation initiation factor IF-2 from Escherichia coli O81 (strain ED1a).